The sequence spans 490 residues: Ketol-acid reductoisomerase (NADP(+)) (490 aa).

Positions 17-208 constitute a KARI N-terminal Rossmann domain; sequence LAQCEFMNAD…GGHRAGVLKS (192 aa). NADP(+) is bound by residues 45–48, Arg68, Arg76, Ser78, and 108–110; these read CGAQ and DKQ. His132 is an active-site residue. Residue Gly158 participates in NADP(+) binding. KARI C-terminal knotted domains lie at 209-353 and 355-486; these read SFIA…AEQE and FDNG…MSAM. Mg(2+) contacts are provided by Asp217, Glu221, Glu389, and Glu393. Substrate is bound at residue Ser414.

It belongs to the ketol-acid reductoisomerase family. The cofactor is Mg(2+).

It carries out the reaction (2R)-2,3-dihydroxy-3-methylbutanoate + NADP(+) = (2S)-2-acetolactate + NADPH + H(+). It catalyses the reaction (2R,3R)-2,3-dihydroxy-3-methylpentanoate + NADP(+) = (S)-2-ethyl-2-hydroxy-3-oxobutanoate + NADPH + H(+). It functions in the pathway amino-acid biosynthesis; L-isoleucine biosynthesis; L-isoleucine from 2-oxobutanoate: step 2/4. Its pathway is amino-acid biosynthesis; L-valine biosynthesis; L-valine from pyruvate: step 2/4. In terms of biological role, involved in the biosynthesis of branched-chain amino acids (BCAA). Catalyzes an alkyl-migration followed by a ketol-acid reduction of (S)-2-acetolactate (S2AL) to yield (R)-2,3-dihydroxy-isovalerate. In the isomerase reaction, S2AL is rearranged via a Mg-dependent methyl migration to produce 3-hydroxy-3-methyl-2-ketobutyrate (HMKB). In the reductase reaction, this 2-ketoacid undergoes a metal-dependent reduction by NADPH to yield (R)-2,3-dihydroxy-isovalerate. This chain is Ketol-acid reductoisomerase (NADP(+)), found in Pseudoalteromonas translucida (strain TAC 125).